A 327-amino-acid chain; its full sequence is Aspartate carbamoyltransferase catalytic subunit (327 aa).

Carbamoyl phosphate contacts are provided by arginine 54 and threonine 55. Lysine 82 provides a ligand contact to L-aspartate. Carbamoyl phosphate contacts are provided by arginine 104, histidine 134, and glutamine 137. Residues arginine 177 and arginine 232 each contribute to the L-aspartate site. Residues glycine 280 and proline 281 each coordinate carbamoyl phosphate.

Belongs to the aspartate/ornithine carbamoyltransferase superfamily. ATCase family. As to quaternary structure, heterododecamer (2C3:3R2) of six catalytic PyrB chains organized as two trimers (C3), and six regulatory PyrI chains organized as three dimers (R2).

The enzyme catalyses carbamoyl phosphate + L-aspartate = N-carbamoyl-L-aspartate + phosphate + H(+). The protein operates within pyrimidine metabolism; UMP biosynthesis via de novo pathway; (S)-dihydroorotate from bicarbonate: step 2/3. Functionally, catalyzes the condensation of carbamoyl phosphate and aspartate to form carbamoyl aspartate and inorganic phosphate, the committed step in the de novo pyrimidine nucleotide biosynthesis pathway. The protein is Aspartate carbamoyltransferase catalytic subunit of Micrococcus luteus (strain ATCC 4698 / DSM 20030 / JCM 1464 / CCM 169 / CCUG 5858 / IAM 1056 / NBRC 3333 / NCIMB 9278 / NCTC 2665 / VKM Ac-2230) (Micrococcus lysodeikticus).